The primary structure comprises 854 residues: Zinc finger protein 341 (854 aa).

Residues F53–C76 form a C2H2-type 1; atypical zinc finger. Residues D152–V217 are disordered. The segment covering Q163 to T176 has biased composition (polar residues). The segment covering Q177–P210 has biased composition (pro residues). 2 C2H2-type zinc fingers span residues L322–H344 and F350–H372. The segment at S399–E434 is disordered. Residues G408–L422 show a composition bias toward low complexity. 9 consecutive C2H2-type zinc fingers follow at residues Y445–H467, Y473–H497, Y503–H525, Y540–H564, F566–H588, F594–H616, Y622–H644, Y650–H677, and H683–H705. A disordered region spans residues C731 to V763.

The protein belongs to the krueppel C2H2-type zinc-finger protein family. Binds DNA and to the STAT3 promoter.

It localises to the nucleus. In terms of biological role, transcriptional activator of STAT3 involved in the regulation of immune homeostasis. Also able to activate STAT1 transcription. This chain is Zinc finger protein 341 (ZNF341), found in Homo sapiens (Human).